Consider the following 318-residue polypeptide: Anchor protein (318 aa).

It is found in the virion. Anchors indirectly the receptor binding (RBP) protein (depolymerase) to the virion. This is Anchor protein from Klebsiella pneumoniae (Bacteriophage NTUH-K2044-K1-1).